The primary structure comprises 40 residues: Large ribosomal subunit protein bL36B (40 aa).

This sequence belongs to the bacterial ribosomal protein bL36 family.

The polypeptide is Large ribosomal subunit protein bL36B (Clavibacter michiganensis subsp. michiganensis (strain NCPPB 382)).